The primary structure comprises 205 residues: Ribosome maturation factor RimP (205 aa).

The span at 1–12 shows a compositional bias: polar residues; that stretch reads MSNAEAQASSDH. 2 disordered regions span residues 1–24 and 186–205; these read MSNAEAQASSDHTAPGKADTAPAH and FSHLSEDGLEPEHNGPSEEA.

This sequence belongs to the RimP family.

The protein resides in the cytoplasm. Required for maturation of 30S ribosomal subunits. The polypeptide is Ribosome maturation factor RimP (Pseudarthrobacter chlorophenolicus (strain ATCC 700700 / DSM 12829 / CIP 107037 / JCM 12360 / KCTC 9906 / NCIMB 13794 / A6) (Arthrobacter chlorophenolicus)).